Here is a 408-residue protein sequence, read N- to C-terminus: MKDVLERFLGYIKVDTQSSEESDTVPTTKTQLEFAKKLGEELKAIGLKDVSVDENGYVMATLESNIDKKVPTIGFIAHMDTSPDLSGTNINPRIVEKYDGQDIVLNKEKNIVLKINEFPEILEYKGQDIVVTDGNTLLGADDKAGIAEIITAMEYLINHPEIKHGTIKVGFTPDEEVGKGADHFDVKKFGADLAYTLDGGGIGELECETFNAAKAKVIIEGRNVHPGSAKNKMTNAVLVANKFINMLPENEVPERTEGYEGFFHLLSVKSEVETAELNYIIRDFDRKKFEERKEQIKEVGKKINEEYNKEIVCVKVEDQYYNMKEKIDEVKYVVDIAYDAMKAIDIEPILVPIRGGTDGSRLSFMGLPTPNLFAGGHNFHGRFEFVPVLSMEKAAELVVKIAELYANR.

Residue histidine 78 participates in Zn(2+) binding. Aspartate 80 is a catalytic residue. Position 141 (aspartate 141) interacts with Zn(2+). Glutamate 175 (proton acceptor) is an active-site residue. Glutamate 176, aspartate 198, and histidine 380 together coordinate Zn(2+).

Belongs to the peptidase M20B family. The cofactor is Zn(2+).

The protein resides in the cytoplasm. The catalysed reaction is Release of the N-terminal residue from a tripeptide.. Its function is as follows. Cleaves the N-terminal amino acid of tripeptides. The chain is Peptidase T from Clostridium botulinum (strain ATCC 19397 / Type A).